Reading from the N-terminus, the 363-residue chain is Phospho-N-acetylmuramoyl-pentapeptide-transferase (363 aa).

Transmembrane regions (helical) follow at residues 27-47, 76-96, 97-117, 137-157, 171-191, 202-222, 226-246, 248-268, 271-291, 292-312, and 340-360; these read AGAA…PLIA, TMGG…WADL, TDGY…VGFA, LGCE…LMPA, WLLP…TGFG, GLAI…SYLV, VFAD…CVFC, ALVG…AVFM, TGSL…KHEL, VLCI…IQVF, and KIVI…LATL.

This sequence belongs to the glycosyltransferase 4 family. MraY subfamily. It depends on Mg(2+) as a cofactor.

It localises to the cell inner membrane. It carries out the reaction UDP-N-acetyl-alpha-D-muramoyl-L-alanyl-gamma-D-glutamyl-meso-2,6-diaminopimeloyl-D-alanyl-D-alanine + di-trans,octa-cis-undecaprenyl phosphate = di-trans,octa-cis-undecaprenyl diphospho-N-acetyl-alpha-D-muramoyl-L-alanyl-D-glutamyl-meso-2,6-diaminopimeloyl-D-alanyl-D-alanine + UMP. It participates in cell wall biogenesis; peptidoglycan biosynthesis. In terms of biological role, catalyzes the initial step of the lipid cycle reactions in the biosynthesis of the cell wall peptidoglycan: transfers peptidoglycan precursor phospho-MurNAc-pentapeptide from UDP-MurNAc-pentapeptide onto the lipid carrier undecaprenyl phosphate, yielding undecaprenyl-pyrophosphoryl-MurNAc-pentapeptide, known as lipid I. The polypeptide is Phospho-N-acetylmuramoyl-pentapeptide-transferase (Gluconacetobacter diazotrophicus (strain ATCC 49037 / DSM 5601 / CCUG 37298 / CIP 103539 / LMG 7603 / PAl5)).